Here is a 479-residue protein sequence, read N- to C-terminus: Ribosomal RNA small subunit methyltransferase F (479 aa).

S-adenosyl-L-methionine contacts are provided by residues 125–131 (AAAPGSK), E149, D176, and D194. The active-site Nucleophile is the C247.

Belongs to the class I-like SAM-binding methyltransferase superfamily. RsmB/NOP family.

The protein resides in the cytoplasm. The enzyme catalyses cytidine(1407) in 16S rRNA + S-adenosyl-L-methionine = 5-methylcytidine(1407) in 16S rRNA + S-adenosyl-L-homocysteine + H(+). Its function is as follows. Specifically methylates the cytosine at position 1407 (m5C1407) of 16S rRNA. This is Ribosomal RNA small subunit methyltransferase F from Escherichia fergusonii (strain ATCC 35469 / DSM 13698 / CCUG 18766 / IAM 14443 / JCM 21226 / LMG 7866 / NBRC 102419 / NCTC 12128 / CDC 0568-73).